Reading from the N-terminus, the 824-residue chain is Probable ion channel POLLUX (824 aa).

The span at 45–54 shows a compositional bias: low complexity; that stretch reads DGDDSSNLPT. Residues 45–70 are disordered; sequence DGDDSSNLPTVPNPEEKPVPVPSQSP. Helical transmembrane passes span 81–101, 135–155, 198–218, and 250–270; these read FSLT…VMFL, AVVF…YMYL, LALL…LYAV, and IVSV…LGLI. RCK N-terminal domains are found at residues 291–432 and 550–699; these read SNHI…ETVV and PEKI…DKSI. Residues 325 to 346 are a coiled coil; that stretch reads LAERDKEEMETDIAKFEFDLMG.

This sequence belongs to the castor/pollux (TC 1.A.1.23) family.

The protein resides in the nucleus membrane. The protein is Probable ion channel POLLUX of Arabidopsis thaliana (Mouse-ear cress).